The primary structure comprises 237 residues: Apoptosis regulator OPG045 (237 aa).

The protein belongs to the orthopoxvirus OPG045 family. In terms of assembly, interacts with host BAK1, BAX and BID.

The protein localises to the host mitochondrion outer membrane. It localises to the host cytoplasm. Its function is as follows. Plays a role in the inhibition of host apoptosis. Interacts with host BAX and thereby inhibits its activity. This is Apoptosis regulator OPG045 (OPG045) from Homo sapiens (Human).